Reading from the N-terminus, the 320-residue chain is Mycothiol acetyltransferase (320 aa).

2 consecutive N-acetyltransferase domains span residues 16 to 141 (RQVR…RSLR) and 152 to 320 (LQIR…AALA). Glutamate 36 provides a ligand contact to 1D-myo-inositol 2-(L-cysteinylamino)-2-deoxy-alpha-D-glucopyranoside. Acetyl-CoA-binding positions include 80 to 82 (LVV) and 88 to 93 (RRGIAT). Glutamate 179, lysine 229, and glutamate 239 together coordinate 1D-myo-inositol 2-(L-cysteinylamino)-2-deoxy-alpha-D-glucopyranoside. Residues 243 to 245 (LGV) and 250 to 256 (QGRGLGR) contribute to the acetyl-CoA site. Tyrosine 284 provides a ligand contact to 1D-myo-inositol 2-(L-cysteinylamino)-2-deoxy-alpha-D-glucopyranoside. Acetyl-CoA is bound at residue 289–294 (NIAAVR).

It belongs to the acetyltransferase family. MshD subfamily. As to quaternary structure, monomer.

The enzyme catalyses 1D-myo-inositol 2-(L-cysteinylamino)-2-deoxy-alpha-D-glucopyranoside + acetyl-CoA = mycothiol + CoA + H(+). Its function is as follows. Catalyzes the transfer of acetyl from acetyl-CoA to desacetylmycothiol (Cys-GlcN-Ins) to form mycothiol. This Mycobacterium marinum (strain ATCC BAA-535 / M) protein is Mycothiol acetyltransferase.